Reading from the N-terminus, the 241-residue chain is Triosephosphate isomerase (241 aa).

9-11 (NWK) is a binding site for substrate. The active-site Electrophile is His-96. The active-site Proton acceptor is the Glu-165. Substrate contacts are provided by residues Gly-171, Ser-204, and 225–226 (GG).

It belongs to the triosephosphate isomerase family. Homodimer.

It localises to the cytoplasm. The enzyme catalyses D-glyceraldehyde 3-phosphate = dihydroxyacetone phosphate. It functions in the pathway carbohydrate biosynthesis; gluconeogenesis. It participates in carbohydrate degradation; glycolysis; D-glyceraldehyde 3-phosphate from glycerone phosphate: step 1/1. Involved in the gluconeogenesis. Catalyzes stereospecifically the conversion of dihydroxyacetone phosphate (DHAP) to D-glyceraldehyde-3-phosphate (G3P). This chain is Triosephosphate isomerase, found in Prochlorococcus marinus (strain MIT 9301).